The chain runs to 240 residues: NADH-quinone oxidoreductase subunit C (240 aa).

Residues 1-82 (MSEEEKPKPK…PVDENRDPEP (82 aa)) are disordered. Residues 11–20 (LSPALAAKMA) are compositionally biased toward low complexity. The segment covering 67-82 (DKPKAEPVDENRDPEP) has biased composition (basic and acidic residues).

This sequence belongs to the complex I 30 kDa subunit family. As to quaternary structure, NDH-1 is composed of 14 different subunits. Subunits NuoB, C, D, E, F, and G constitute the peripheral sector of the complex.

It localises to the cell inner membrane. It catalyses the reaction a quinone + NADH + 5 H(+)(in) = a quinol + NAD(+) + 4 H(+)(out). Its function is as follows. NDH-1 shuttles electrons from NADH, via FMN and iron-sulfur (Fe-S) centers, to quinones in the respiratory chain. The immediate electron acceptor for the enzyme in this species is believed to be a menaquinone. Couples the redox reaction to proton translocation (for every two electrons transferred, four hydrogen ions are translocated across the cytoplasmic membrane), and thus conserves the redox energy in a proton gradient. The chain is NADH-quinone oxidoreductase subunit C from Chloroherpeton thalassium (strain ATCC 35110 / GB-78).